A 125-amino-acid chain; its full sequence is uncharacterized protein (125 aa).

This sequence belongs to the anhydro-N-acetylmuramic acid kinase family.

This is an uncharacterized protein from Yersinia enterocolitica.